The following is a 410-amino-acid chain: MALEISRLFPQNIQELPSLSGVRIATAEAGIKYKDRTDLLFIVFDKSASVAGVFTRSKCPSAPVEHCRISLPHGVARGVVVNSGNANAFTGRKGKQTVDTIICAAANALKVKKNEIFIASTGVIGEPMEASSIVNLLPSMAKTAKEGNWLEAAKAIMTTDTFPKLATRRFDCGGETITINGIAKGAGMIAPDMATMLSFVVSDAAISSQMLQSMLSEAVQESFNSITVDSDTSTSDTLMMFATGKESFPCITSKTDPRYEVFSKQLRALLHELALQVVCDGEGARHLIEVHVIGATTDNTAKIIALSIANSPLVKTAIAGEDANWGRVVMAVGKAGVEVDRDLLTIWFGEHRLAINGERDPEYCEEKIGAYMQNKHITIRVDIGLGTGKATVWSCDLTKEYVMINGDYRS.

The substrate site is built by Thr158, Lys184, Thr195, Glu282, Asn405, and Ser410. Thr195 acts as the Nucleophile in catalysis.

Belongs to the ArgJ family. As to quaternary structure, heterotetramer of two alpha and two beta chains.

The protein localises to the cytoplasm. The enzyme catalyses N(2)-acetyl-L-ornithine + L-glutamate = N-acetyl-L-glutamate + L-ornithine. It catalyses the reaction L-glutamate + acetyl-CoA = N-acetyl-L-glutamate + CoA + H(+). It functions in the pathway amino-acid biosynthesis; L-arginine biosynthesis; L-ornithine and N-acetyl-L-glutamate from L-glutamate and N(2)-acetyl-L-ornithine (cyclic): step 1/1. The protein operates within amino-acid biosynthesis; L-arginine biosynthesis; N(2)-acetyl-L-ornithine from L-glutamate: step 1/4. In terms of biological role, catalyzes two activities which are involved in the cyclic version of arginine biosynthesis: the synthesis of N-acetylglutamate from glutamate and acetyl-CoA as the acetyl donor, and of ornithine by transacetylation between N(2)-acetylornithine and glutamate. This is Arginine biosynthesis bifunctional protein ArgJ from Bartonella henselae (strain ATCC 49882 / DSM 28221 / CCUG 30454 / Houston 1) (Rochalimaea henselae).